We begin with the raw amino-acid sequence, 68 residues long: MQIIVRDNNVDQALRALKKKLQREGVYREMKLRRHYEKPSEKRARERAAAVRRSRKLERKRAERDGIR.

The tract at residues 36–68 (YEKPSEKRARERAAAVRRSRKLERKRAERDGIR) is disordered. The span at 37–49 (EKPSEKRARERAA) shows a compositional bias: basic and acidic residues. The segment covering 50 to 59 (AVRRSRKLER) has biased composition (basic residues).

It belongs to the bacterial ribosomal protein bS21 family.

The polypeptide is Small ribosomal subunit protein bS21 (Zymomonas mobilis subsp. mobilis (strain ATCC 31821 / ZM4 / CP4)).